The chain runs to 428 residues: Sporulation kinase B (428 aa).

The Cytoplasmic portion of the chain corresponds to 1 to 6 (MEILKD). Residues 7-27 (YLLHICFILFPILLYQVFWLG) traverse the membrane as a helical segment. At 28-37 (KPAILVPKIN) the chain is on the extracellular side. Residues 38-58 (SGLVTLFACGASVLCIIFPIH) traverse the membrane as a helical segment. Residues 59-68 (EMDYIQYGLQ) are Cytoplasmic-facing. Residues 69–89 (MIPVIICLFYISTASGLTVAA) traverse the membrane as a helical segment. Topologically, residues 90–99 (SVLCFELLFY) are extracellular. The helical transmembrane segment at 100–120 (EPSAMFVFTLLPFLIIIPILF) threads the bilayer. Topologically, residues 121–132 (QKKWPFMSKAKK) are cytoplasmic. The chain crosses the membrane as a helical span at residues 133–153 (LLLSLLISCVEIFLFFASSWI). Topologically, residues 154 to 166 (LSALNILNFQKSG) are extracellular. The chain crosses the membrane as a helical span at residues 167–187 (IFVYEAAVSGLFRSSVLLLSI). Residues 188–428 (YIIESIAENI…TIKLPADLPH (241 aa)) are Cytoplasmic-facing. A Histidine kinase domain is found at 218–426 (SVAHEVRNPL…TVTIKLPADL (209 aa)). Histidine 221 carries the phosphohistidine; by autocatalysis modification.

The protein localises to the cell membrane. The catalysed reaction is ATP + protein L-histidine = ADP + protein N-phospho-L-histidine.. In terms of biological role, phosphorylates the sporulation-regulatory proteins spo0A and spo0F. Spo0F is required for the KinB activity. The chain is Sporulation kinase B (kinB) from Bacillus subtilis (strain 168).